The following is a 263-amino-acid chain: tRNA pseudouridine synthase A (263 aa).

The active-site Nucleophile is Asp-51. Tyr-106 lines the substrate pocket.

The protein belongs to the tRNA pseudouridine synthase TruA family.

The enzyme catalyses uridine(38/39/40) in tRNA = pseudouridine(38/39/40) in tRNA. In terms of biological role, formation of pseudouridine at positions 38, 39 and 40 in the anticodon stem and loop of transfer RNAs. In Pyrococcus abyssi (strain GE5 / Orsay), this protein is tRNA pseudouridine synthase A.